A 66-amino-acid chain; its full sequence is Large ribosomal subunit protein bL35 (66 aa).

Composition is skewed to basic residues over residues 1-16 (MPKF…RFKK) and 23-45 (KRGH…RQLR). Residues 1–66 (MPKFKTHRAS…RIRQMLSQMK (66 aa)) are disordered.

The protein belongs to the bacterial ribosomal protein bL35 family.

The protein is Large ribosomal subunit protein bL35 of Lacticaseibacillus casei (strain BL23) (Lactobacillus casei).